A 261-amino-acid polypeptide reads, in one-letter code: MWFLILFLALSLGGIDAAPPVQSRIFGGFNCEKNSQPWQVAVYRFTKYQCGGVLLNANWVLTAAHCHNDKYQVWLGKNNFFEDEPSAQHRLVSKAIPHPDFNMSLLNEHTPQPEDDYSNDLMLLRLKKPADITDVVKPIDLPTEEPKLGSTCLASGWGSITPVIYEPADDLQCVNFKLLPNEDCVKAHIEKVTDVMLCAGDMDGGKDTCMGDSGGPLICDGVLHGITSWGPSPCGKPNVPGIYTKLIKFNSWIKDTIAKNA.

Positions 1 to 18 (MWFLILFLALSLGGIDAA) are cleaved as a signal peptide. The propeptide at 19–24 (PPVQSR) is activation peptide. The region spanning 25 to 258 (IFGGFNCEKN…FNSWIKDTIA (234 aa)) is the Peptidase S1 domain. 5 disulfides stabilise this stretch: cysteine 31–cysteine 173, cysteine 50–cysteine 66, cysteine 152–cysteine 219, cysteine 184–cysteine 198, and cysteine 209–cysteine 234. Histidine 65 serves as the catalytic Charge relay system. The N-linked (GlcNAc...) asparagine glycan is linked to asparagine 102. The active-site Charge relay system is aspartate 120. Residue serine 213 is the Charge relay system of the active site.

The protein belongs to the peptidase S1 family. Kallikrein subfamily.

It catalyses the reaction Preferential cleavage of Arg-|-Xaa bonds in small molecule substrates. Highly selective action to release kallidin (lysyl-bradykinin) from kininogen involves hydrolysis of Met-|-Xaa or Leu-|-Xaa.. Functionally, glandular kallikreins cleave Met-Lys and Arg-Ser bonds in kininogen to release Lys-bradykinin. The sequence is that of Kallikrein 1-related peptidase b5 (Klk1b5) from Mus musculus (Mouse).